We begin with the raw amino-acid sequence, 181 residues long: Large ribosomal subunit protein uL10 (181 aa).

This sequence belongs to the universal ribosomal protein uL10 family. In terms of assembly, part of the ribosomal stalk of the 50S ribosomal subunit. The N-terminus interacts with L11 and the large rRNA to form the base of the stalk. The C-terminus forms an elongated spine to which L12 dimers bind in a sequential fashion forming a multimeric L10(L12)X complex.

Functionally, forms part of the ribosomal stalk, playing a central role in the interaction of the ribosome with GTP-bound translation factors. This Acidobacterium capsulatum (strain ATCC 51196 / DSM 11244 / BCRC 80197 / JCM 7670 / NBRC 15755 / NCIMB 13165 / 161) protein is Large ribosomal subunit protein uL10.